Here is a 362-residue protein sequence, read N- to C-terminus: Peptide chain release factor 1 (362 aa).

Gln-237 is modified (N5-methylglutamine).

It belongs to the prokaryotic/mitochondrial release factor family. Post-translationally, methylated by PrmC. Methylation increases the termination efficiency of RF1.

It localises to the cytoplasm. Peptide chain release factor 1 directs the termination of translation in response to the peptide chain termination codons UAG and UAA. This is Peptide chain release factor 1 from Legionella pneumophila (strain Corby).